Consider the following 780-residue polypeptide: ATP-dependent 6-phosphofructokinase, liver type (780 aa).

Ala-2 carries the N-acetylalanine modification. The segment at 2-390 (ATVDLEKLRM…NWKIYKLLAH (389 aa)) is N-terminal catalytic PFK domain 1. ATP contacts are provided by residues Gly-25, 88 to 89 (RC), and 118 to 121 (GDGS). Residue Asp-119 participates in Mg(2+) binding. Residues 164–166 (SID), Arg-201, 208–210 (MGR), Glu-264, Arg-292, and 298–301 (HVQR) each bind substrate. Catalysis depends on Asp-166, which acts as the Proton acceptor. Ser-377 is modified (phosphoserine). Positions 391–400 (QKVSKEKSNF) are interdomain linker. The C-terminal regulatory PFK domain 2 stretch occupies residues 401-780 (SLAILNVGAP…RRTLSIDKGF (380 aa)). Beta-D-fructose 2,6-bisphosphate-binding positions include Arg-470, 527-531 (TISNN), Arg-565, 572-574 (MGG), and Glu-628. An O-linked (GlcNAc) serine glycan is attached at Ser-529. Tyr-640 carries the phosphotyrosine modification. Residues Arg-654, 660-663 (HLQQ), and Arg-734 each bind beta-D-fructose 2,6-bisphosphate. Ser-775 is modified (phosphoserine).

It belongs to the phosphofructokinase type A (PFKA) family. ATP-dependent PFK group I subfamily. Eukaryotic two domain clade 'E' sub-subfamily. In terms of assembly, homo- and heterotetramers. Phosphofructokinase (PFK) enzyme functions as a tetramer composed of different combinations of 3 types of subunits, called PFKM (M), PFKL (L) and PFKP (P). The composition of the PFK tetramer differs according to the tissue type it is present in. The kinetic and regulatory properties of the tetrameric enzyme are dependent on the subunit composition, hence can vary across tissues. It depends on Mg(2+) as a cofactor. GlcNAcylation at Ser-529 by OGT decreases enzyme activity, leading to redirect glucose flux through the oxidative pentose phosphate pathway. Glycosylation is stimulated by both hypoxia and glucose deprivation.

The protein resides in the cytoplasm. The catalysed reaction is beta-D-fructose 6-phosphate + ATP = beta-D-fructose 1,6-bisphosphate + ADP + H(+). The protein operates within carbohydrate degradation; glycolysis; D-glyceraldehyde 3-phosphate and glycerone phosphate from D-glucose: step 3/4. Allosterically activated by ADP, AMP, or fructose 2,6-bisphosphate, and allosterically inhibited by ATP or citrate. GlcNAcylation by OGT overcomes allosteric regulation. Its function is as follows. Catalyzes the phosphorylation of D-fructose 6-phosphate to fructose 1,6-bisphosphate by ATP, the first committing step of glycolysis. Negatively regulates the phagocyte oxidative burst in response to bacterial infection by controlling cellular NADPH biosynthesis and NADPH oxidase-derived reactive oxygen species. Upon macrophage activation, drives the metabolic switch toward glycolysis, thus preventing glucose turnover that produces NADPH via pentose phosphate pathway. This chain is ATP-dependent 6-phosphofructokinase, liver type (Pfkl), found in Rattus norvegicus (Rat).